The primary structure comprises 81 residues: Salivary thrombin inhibitor anophelin (81 aa).

Positions 1 to 22 (MANKLFLISLLCVVLVAKIAQA) are cleaved as a signal peptide. An N-linked (GlcNAc...) asparagine glycan is attached at asparagine 45. The interval 70-73 (DPGR) is blocks active site cleft of host thrombin in a reverse direction compared to substrates.

The protein belongs to the anophelin family. As to quaternary structure, interacts with human F2 (thrombin); the interaction results in thrombin inhibition.

It is found in the secreted. Functionally, salivary protein with anticoagulant activity that inhibits host thrombin (F2). The sequence is that of Salivary thrombin inhibitor anophelin from Anopheles darlingi (Mosquito).